A 329-amino-acid polypeptide reads, in one-letter code: Glycerol-3-phosphate dehydrogenase [NAD(P)+] (329 aa).

3 residues coordinate NADPH: Trp15, His35, and Lys107. 3 residues coordinate sn-glycerol 3-phosphate: Lys107, Gly135, and Ser137. Ala139 provides a ligand contact to NADPH. Sn-glycerol 3-phosphate is bound by residues Lys190, Asp243, Ser253, Arg254, and Asn255. Lys190 functions as the Proton acceptor in the catalytic mechanism. Arg254 contributes to the NADPH binding site. NADPH is bound by residues Leu276 and Glu278.

Belongs to the NAD-dependent glycerol-3-phosphate dehydrogenase family.

It is found in the cytoplasm. The catalysed reaction is sn-glycerol 3-phosphate + NAD(+) = dihydroxyacetone phosphate + NADH + H(+). It catalyses the reaction sn-glycerol 3-phosphate + NADP(+) = dihydroxyacetone phosphate + NADPH + H(+). It participates in membrane lipid metabolism; glycerophospholipid metabolism. Functionally, catalyzes the reduction of the glycolytic intermediate dihydroxyacetone phosphate (DHAP) to sn-glycerol 3-phosphate (G3P), the key precursor for phospholipid synthesis. The chain is Glycerol-3-phosphate dehydrogenase [NAD(P)+] from Rhodopseudomonas palustris (strain BisB5).